The following is a 195-amino-acid chain: Dynactin subunit 6 (195 aa).

This sequence belongs to the dynactin subunits 5/6 family. Dynactin subunit 6 subfamily. Member of the pointed-end complex of the dynactin shoulder complex which contains dctn4, dctn5 and dctn6 subunits and Actr10. Within the complex dctn6 forms a heterodimer with dctn5. Interacts with plk1.

It is found in the cytoplasm. The protein localises to the cytoskeleton. The protein resides in the chromosome. It localises to the centromere. Its subcellular location is the kinetochore. In terms of biological role, part of the dynactin complex that activates the molecular motor dynein for ultra-processive transport along microtubules. The polypeptide is Dynactin subunit 6 (dctn6) (Danio rerio (Zebrafish)).